Reading from the N-terminus, the 580-residue chain is Alpha-thujene synthase TPS3, chloroplastic (580 aa).

The N-terminal 26 residues, 1 to 26 (MALQLLTPSFSFQHSPSPHRLTTLRY), are a transit peptide targeting the chloroplast. Positions 296, 333, 337, 473, and 476 each coordinate (2E)-geranyl diphosphate. Asp-333 and Asp-337 together coordinate Mg(2+). Residues 333–337 (DDVYD) carry the DDXXD motif motif. Mg(2+)-binding residues include Asp-476, Thr-480, and Glu-484.

It belongs to the terpene synthase family. Tpsb subfamily. As to quaternary structure, monomer. Mg(2+) is required as a cofactor. It depends on Mn(2+) as a cofactor. In terms of tissue distribution, mostly expressed in developing and mature fruits, and, to a lower extent, in male leaves. Barely detectable in female leaves and shoots.

It localises to the plastid. Its subcellular location is the chloroplast. The catalysed reaction is (2E)-geranyl diphosphate = alpha-thujene + diphosphate. It carries out the reaction (2E)-geranyl diphosphate = (1R,5R)-sabinene + diphosphate. It participates in secondary metabolite biosynthesis; terpenoid biosynthesis. Functionally, monoterpene synthase (TPS) involved in the biosynthesis of monoterpene natural products used by traditional Chinese medicine to treat headache, inflammation and intoxication. Catalyzes the conversion of (2E)-geranyl diphosphate (GPP) into alpha-thujene and (1R,5R)-sabinene. This is Alpha-thujene synthase TPS3, chloroplastic from Litsea cubeba (Aromatic litsea).